Consider the following 326-residue polypeptide: MASISSLNQIPCKTLQITSQYSKPTSKISTLPISSTNFLSKTEQHRSISVKEFTNPKPKFTAQATNYDKEDEWGPEVEQIRPGGVAVVEEEPPKEPSEIELLKKQLADSLYGTNRGLSASSETRAEIVELITQLESKNPNPAPTEALTLLNGKWILAYTSFSGLFPLLSRGNLPLVRVEEISQTIDSESFTVQNSVVFAGPLATTSISTNAKFEVRSPKRVQIKFEEGIIGTPQLTDSIVLPENVEFLGQKIDVSPFKGLITSVQDTASSVVKSISSQPPIKFPITNNNAQSWLLTTYLDDELRIPRGDAGSVFVLIKEGSPLLKP.

A chloroplast-targeting transit peptide spans 1–63; the sequence is MASISSLNQI…TNPKPKFTAQ (63 aa).

Belongs to the LIPC family. As to quaternary structure, associates with the major light-harvesting antenna complex polypeptides of the PSII oxygen-evolving complex. Expressed at high levels in leaves and in the petals and anthers of flowers.

The protein resides in the plastid. The protein localises to the chloroplast thylakoid membrane. Required for normal plant growth. May be both photoprotective and play an ancillary role in photosynthesis. May structurally stabilize thylakoids during osmotic and oxidative stress. This chain is Light-induced protein, chloroplastic, found in Solanum demissum (Wild potato).